We begin with the raw amino-acid sequence, 216 residues long: UDP-N-acetylglucosamine transferase subunit ALG14 (216 aa).

Over 1–3 (MVC) the chain is Lumenal. Residues 4-24 (VLTLAASAGGLAVLLIVRLWA) traverse the membrane as a helical segment. The Cytoplasmic segment spans residues 25 to 216 (VLRSHPVTPR…PKSVYLGRIV (192 aa)).

This sequence belongs to the ALG14 family. Forms with ALG13 the active heterodimeric UDP-N-acetylglucosamine transferase complex.

It localises to the endoplasmic reticulum membrane. Its function is as follows. Part of the UDP-N-acetylglucosamine transferase complex that operates in the biosynthetic pathway of dolichol-linked oligosaccharides, the glycan precursors employed in protein asparagine (N)-glycosylation. The assembly of dolichol-linked oligosaccharides begins on the cytosolic side of the endoplasmic reticulum membrane and finishes in its lumen. The sequential addition of sugars to dolichol pyrophosphate produces dolichol-linked oligosaccharides containing fourteen sugars, including two GlcNAcs, nine mannoses and three glucoses. Once assembled, the oligosaccharides are transferred from the lipid to nascent proteins by oligosaccharyltransferases. Functions as a protein-membrane adapter recruiting ALG13 at the cytoplasmic face of the endoplasmic reticulum, where the complex catalyzes the second step of dolichol pyrophosphate biosynthesis, transferring a beta1,4-linked N-acetylglucosamine (GlcNAc) from UDP-GlcNAc to GlcNAc-pyrophosphatedolichol (Gn-PDol) to produce N,N'-diacetylchitobiosyl diphosphodolichol. N,N'-diacetylchitobiosyl diphosphodolichol is a substrate for ALG1, the following enzyme in the biosynthetic pathway. The protein is UDP-N-acetylglucosamine transferase subunit ALG14 of Rattus norvegicus (Rat).